Consider the following 105-residue polypeptide: Large ribosomal subunit protein bL21 (105 aa).

It belongs to the bacterial ribosomal protein bL21 family. In terms of assembly, part of the 50S ribosomal subunit. Contacts protein L20.

In terms of biological role, this protein binds to 23S rRNA in the presence of protein L20. This chain is Large ribosomal subunit protein bL21, found in Rhizobium rhizogenes (strain K84 / ATCC BAA-868) (Agrobacterium radiobacter).